The sequence spans 355 residues: Probable butyrate kinase (355 aa).

It belongs to the acetokinase family.

It is found in the cytoplasm. It carries out the reaction butanoate + ATP = butanoyl phosphate + ADP. This Clostridium botulinum (strain Alaska E43 / Type E3) protein is Probable butyrate kinase.